Reading from the N-terminus, the 265-residue chain is uncharacterized protein (265 aa).

2 disordered regions span residues 21 to 53 (TLTH…LGPH) and 78 to 133 (HAPS…SSVS). Residues 90 to 101 (DDDDDDEDDDDS) show a composition bias toward acidic residues. Residues 114-123 (SSSSSSSPRV) are compositionally biased toward low complexity. 137–144 (AILHQGKS) serves as a coordination point for ATP.

This is an uncharacterized protein from Saccharomyces cerevisiae (strain ATCC 204508 / S288c) (Baker's yeast).